The primary structure comprises 339 residues: ADP,ATP carrier protein (339 aa).

3 Solcar repeats span residues 39–133 (MAFV…IKGL), 145–234 (RFFV…AKGV), and 246–328 (AKWA…IKKF). A run of 5 helical transmembrane segments spans residues 41–70 (FVKD…LLLQ), 110–134 (LANV…KGLF), 144–164 (WRFF…SLLI), 212–232 (VSVQ…DTAK), and 245–265 (FAKW…SYPF). Positions 115 and 127 each coordinate ADP. Position 269 (R269) interacts with ADP. An important for transport activity region spans residues 269 to 274 (RRRLMM). The Nucleotide carrier signature motif motif lies at 269-274 (RRRLMM). Residues 305–322 (AWSNVLRGAGGAFVLVLY) form a helical membrane-spanning segment.

It belongs to the mitochondrial carrier (TC 2.A.29) family. As to quaternary structure, monomer.

It is found in the mitochondrion inner membrane. It carries out the reaction ADP(in) + ATP(out) = ADP(out) + ATP(in). Its activity is regulated as follows. The matrix-open state (m-state) is inhibited by the membrane-permeable bongkrekic acid (BKA). The cytoplasmic-open state (c-state) is inhibited by the membrane-impermeable toxic inhibitor carboxyatractyloside (CATR). In terms of biological role, ADP:ATP antiporter that mediates import of ADP into the mitochondrial matrix for ATP synthesis, and export of ATP out to fuel the cell. Cycles between the cytoplasmic-open state (c-state) and the matrix-open state (m-state): operates by the alternating access mechanism with a single substrate-binding site intermittently exposed to either the cytosolic (c-state) or matrix (m-state) side of the inner mitochondrial membrane. In Parachlorella kessleri (Green alga), this protein is ADP,ATP carrier protein.